A 280-amino-acid polypeptide reads, in one-letter code: Tryptophan synthase alpha chain (280 aa).

Active-site proton acceptor residues include Glu-50 and Asp-61.

This sequence belongs to the TrpA family. As to quaternary structure, tetramer of two alpha and two beta chains.

It catalyses the reaction (1S,2R)-1-C-(indol-3-yl)glycerol 3-phosphate + L-serine = D-glyceraldehyde 3-phosphate + L-tryptophan + H2O. The protein operates within amino-acid biosynthesis; L-tryptophan biosynthesis; L-tryptophan from chorismate: step 5/5. Functionally, the alpha subunit is responsible for the aldol cleavage of indoleglycerol phosphate to indole and glyceraldehyde 3-phosphate. This is Tryptophan synthase alpha chain from Methylorubrum extorquens (strain CM4 / NCIMB 13688) (Methylobacterium extorquens).